The sequence spans 96 residues: UPF0166 protein aq_448 (96 aa).

It belongs to the UPF0166 family.

In Aquifex aeolicus (strain VF5), this protein is UPF0166 protein aq_448.